We begin with the raw amino-acid sequence, 296 residues long: Bifunctional protein FolD (296 aa).

Residues 166 to 168, Ser191, and Ile232 contribute to the NADP(+) site; that span reads GRS.

The protein belongs to the tetrahydrofolate dehydrogenase/cyclohydrolase family. Homodimer.

The catalysed reaction is (6R)-5,10-methylene-5,6,7,8-tetrahydrofolate + NADP(+) = (6R)-5,10-methenyltetrahydrofolate + NADPH. The enzyme catalyses (6R)-5,10-methenyltetrahydrofolate + H2O = (6R)-10-formyltetrahydrofolate + H(+). It participates in one-carbon metabolism; tetrahydrofolate interconversion. Its function is as follows. Catalyzes the oxidation of 5,10-methylenetetrahydrofolate to 5,10-methenyltetrahydrofolate and then the hydrolysis of 5,10-methenyltetrahydrofolate to 10-formyltetrahydrofolate. This Cereibacter sphaeroides (strain ATCC 17025 / ATH 2.4.3) (Rhodobacter sphaeroides) protein is Bifunctional protein FolD.